The sequence spans 467 residues: Cobyrinate a,c-diamide synthase (467 aa).

The region spanning 256–449 is the GATase cobBQ-type domain; sequence RVGYAADQAF…AHIHVEGAPE (194 aa). Cysteine 338 serves as the catalytic Nucleophile.

The protein belongs to the CobB/CbiA family. Requires Mg(2+) as cofactor.

The enzyme catalyses cob(II)yrinate + 2 L-glutamine + 2 ATP + 2 H2O = cob(II)yrinate a,c diamide + 2 L-glutamate + 2 ADP + 2 phosphate + 2 H(+). Its pathway is cofactor biosynthesis; adenosylcobalamin biosynthesis; cob(II)yrinate a,c-diamide from sirohydrochlorin (anaerobic route): step 10/10. Functionally, catalyzes the ATP-dependent amidation of the two carboxylate groups at positions a and c of cobyrinate, using either L-glutamine or ammonia as the nitrogen source. The protein is Cobyrinate a,c-diamide synthase of Magnetococcus marinus (strain ATCC BAA-1437 / JCM 17883 / MC-1).